A 130-amino-acid chain; its full sequence is Peptide methionine sulfoxide reductase MsrB (130 aa).

Residues 1-122 (MKKREDMTEM…NSVSMAFEDS (122 aa)) form the MsrB domain. Zn(2+)-binding residues include C39, C42, C88, and C91. C111 serves as the catalytic Nucleophile.

It belongs to the MsrB Met sulfoxide reductase family. Zn(2+) is required as a cofactor.

It catalyses the reaction L-methionyl-[protein] + [thioredoxin]-disulfide + H2O = L-methionyl-(R)-S-oxide-[protein] + [thioredoxin]-dithiol. The sequence is that of Peptide methionine sulfoxide reductase MsrB from Pasteurella multocida (strain Pm70).